The sequence spans 423 residues: Glutamate-1-semialdehyde 2,1-aminomutase (423 aa).

Position 262 is an N6-(pyridoxal phosphate)lysine (Lys-262).

Belongs to the class-III pyridoxal-phosphate-dependent aminotransferase family. HemL subfamily. In terms of assembly, homodimer. It depends on pyridoxal 5'-phosphate as a cofactor.

The protein resides in the cytoplasm. It carries out the reaction (S)-4-amino-5-oxopentanoate = 5-aminolevulinate. The protein operates within porphyrin-containing compound metabolism; protoporphyrin-IX biosynthesis; 5-aminolevulinate from L-glutamyl-tRNA(Glu): step 2/2. This chain is Glutamate-1-semialdehyde 2,1-aminomutase, found in Campylobacter fetus subsp. fetus (strain 82-40).